A 202-amino-acid polypeptide reads, in one-letter code: Urease accessory protein UreG (202 aa).

11 to 18 is a binding site for GTP; it reads GPVGSGKT.

The protein belongs to the SIMIBI class G3E GTPase family. UreG subfamily. As to quaternary structure, homodimer. UreD, UreF and UreG form a complex that acts as a GTP-hydrolysis-dependent molecular chaperone, activating the urease apoprotein by helping to assemble the nickel containing metallocenter of UreC. The UreE protein probably delivers the nickel.

It localises to the cytoplasm. Facilitates the functional incorporation of the urease nickel metallocenter. This process requires GTP hydrolysis, probably effectuated by UreG. The polypeptide is Urease accessory protein UreG (Prochlorococcus marinus (strain MIT 9313)).